The primary structure comprises 320 residues: o-succinylbenzoate synthase (320 aa).

The active-site Proton donor is K133. D161, E190, and D213 together coordinate Mg(2+). Residue K235 is the Proton acceptor of the active site.

This sequence belongs to the mandelate racemase/muconate lactonizing enzyme family. MenC type 1 subfamily. A divalent metal cation serves as cofactor.

It carries out the reaction (1R,6R)-6-hydroxy-2-succinyl-cyclohexa-2,4-diene-1-carboxylate = 2-succinylbenzoate + H2O. The protein operates within quinol/quinone metabolism; 1,4-dihydroxy-2-naphthoate biosynthesis; 1,4-dihydroxy-2-naphthoate from chorismate: step 4/7. It functions in the pathway quinol/quinone metabolism; menaquinone biosynthesis. Converts 2-succinyl-6-hydroxy-2,4-cyclohexadiene-1-carboxylate (SHCHC) to 2-succinylbenzoate (OSB). This Escherichia coli (strain SMS-3-5 / SECEC) protein is o-succinylbenzoate synthase.